Consider the following 134-residue polypeptide: Large ribosomal subunit protein uL16c (134 aa).

Basic residues predominate over residues 1-17 (MLSPKRTRFRKQHRGRM). The disordered stretch occupies residues 1-22 (MLSPKRTRFRKQHRGRMKGISS).

Belongs to the universal ribosomal protein uL16 family. Part of the 50S ribosomal subunit.

Its subcellular location is the plastid. It is found in the chloroplast. The chain is Large ribosomal subunit protein uL16c from Solanum tuberosum (Potato).